Reading from the N-terminus, the 288-residue chain is Cell division protein ZipA (288 aa).

Residue Met1 is a topological domain, periplasmic. A helical membrane pass occupies residues 2-22 (EIGLREWLIVIGIIVIAGILF). The Cytoplasmic portion of the chain corresponds to 23–288 (DGWRRMRGGK…FERRALTQKR (266 aa)). Basic and acidic residues-rich tracts occupy residues 66–75 (KEPQLDEHDL) and 83–93 (REAREPRESGS). A disordered region spans residues 66-141 (KEPQLDEHDL…AKSSPAVADK (76 aa)). A compositionally biased stretch (low complexity) spans 106–117 (GDLNLDLDLDGG).

It belongs to the ZipA family. As to quaternary structure, interacts with FtsZ via their C-terminal domains.

The protein resides in the cell inner membrane. In terms of biological role, essential cell division protein that stabilizes the FtsZ protofilaments by cross-linking them and that serves as a cytoplasmic membrane anchor for the Z ring. Also required for the recruitment to the septal ring of downstream cell division proteins. The chain is Cell division protein ZipA from Pseudomonas fluorescens (strain Pf0-1).